Here is a 317-residue protein sequence, read N- to C-terminus: Tyrosine--tRNA ligase (317 aa).

Tyrosine 33 contacts L-tyrosine. The 'HIGH' region signature appears at 38-46; that stretch reads PSGKIHMGH. L-tyrosine contacts are provided by tyrosine 155, glutamine 159, aspartate 162, and glutamine 177. The short motif at 211-215 is the 'KMSKS' region element; it reads KMASS. Serine 214 lines the ATP pocket.

It belongs to the class-I aminoacyl-tRNA synthetase family. TyrS type 3 subfamily. As to quaternary structure, homodimer.

It is found in the cytoplasm. It carries out the reaction tRNA(Tyr) + L-tyrosine + ATP = L-tyrosyl-tRNA(Tyr) + AMP + diphosphate + H(+). In terms of biological role, catalyzes the attachment of tyrosine to tRNA(Tyr) in a two-step reaction: tyrosine is first activated by ATP to form Tyr-AMP and then transferred to the acceptor end of tRNA(Tyr). This Methanosarcina acetivorans (strain ATCC 35395 / DSM 2834 / JCM 12185 / C2A) protein is Tyrosine--tRNA ligase.